The primary structure comprises 465 residues: Cysteine--tRNA ligase (465 aa).

Cysteine 27 is a binding site for Zn(2+). The 'HIGH' region signature appears at 29-39; that stretch reads PTTYNYIHIGN. The Zn(2+) site is built by cysteine 207, histidine 232, and glutamate 236. Residues 264–268 carry the 'KMSKS' region motif; that stretch reads KMSKS. Lysine 267 is an ATP binding site.

Belongs to the class-I aminoacyl-tRNA synthetase family. As to quaternary structure, monomer. Zn(2+) is required as a cofactor.

The protein localises to the cytoplasm. It catalyses the reaction tRNA(Cys) + L-cysteine + ATP = L-cysteinyl-tRNA(Cys) + AMP + diphosphate. The polypeptide is Cysteine--tRNA ligase (Carboxydothermus hydrogenoformans (strain ATCC BAA-161 / DSM 6008 / Z-2901)).